The primary structure comprises 144 residues: Giant hemoglobin AIII chain (144 aa).

Residues 2-144 form the Globin domain; the sequence is ECGPLQRLKV…DVITGGIQGN (143 aa). His-95 provides a ligand contact to heme b.

It belongs to the globin family. As to quaternary structure, giant hemoglobin is composed of four heme-containing chains (AI to AIV), and two linker chains (AV and AVI).

The polypeptide is Giant hemoglobin AIII chain (Lamellibrachia sp. (Deep-sea giant tube worm)).